A 209-amino-acid polypeptide reads, in one-letter code: A-type ATP synthase subunit D (209 aa).

Belongs to the V-ATPase D subunit family. Has multiple subunits with at least A(3), B(3), C, D, E, F, H, I and proteolipid K(x).

Its subcellular location is the cell membrane. In terms of biological role, component of the A-type ATP synthase that produces ATP from ADP in the presence of a proton gradient across the membrane. This Sulfolobus acidocaldarius (strain ATCC 33909 / DSM 639 / JCM 8929 / NBRC 15157 / NCIMB 11770) protein is A-type ATP synthase subunit D.